Here is a 726-residue protein sequence, read N- to C-terminus: Catalase-peroxidase (726 aa).

A disordered region spans residues methionine 1–threonine 33. A cross-link (tryptophyl-tyrosyl-methioninium (Trp-Tyr) (with M-252)) is located at residues tryptophan 105–tyrosine 226. Histidine 106 serves as the catalytic Proton acceptor. Residues tyrosine 226–methionine 252 constitute a cross-link (tryptophyl-tyrosyl-methioninium (Tyr-Met) (with W-105)). A heme b-binding site is contributed by histidine 267.

Belongs to the peroxidase family. Peroxidase/catalase subfamily. Homodimer or homotetramer. It depends on heme b as a cofactor. In terms of processing, formation of the three residue Trp-Tyr-Met cross-link is important for the catalase, but not the peroxidase activity of the enzyme.

It catalyses the reaction H2O2 + AH2 = A + 2 H2O. The catalysed reaction is 2 H2O2 = O2 + 2 H2O. Bifunctional enzyme with both catalase and broad-spectrum peroxidase activity. The polypeptide is Catalase-peroxidase (Shigella sonnei (strain Ss046)).